The primary structure comprises 216 residues: Transmembrane protein 125 (216 aa).

Helical transmembrane passes span 32–52, 65–85, 111–131, and 144–164; these read LLCF…GVAL, LAVG…QLMS, AVVV…LAGL, and MLSV…GLLL.

Its subcellular location is the membrane. The polypeptide is Transmembrane protein 125 (Tmem125) (Mus musculus (Mouse)).